The primary structure comprises 201 residues: Peptide deformylase (201 aa).

A disordered region spans residues 1–21 (MANHFSQLAKKSRTNGNAEKI). Fe cation is bound by residues Cys121 and His163. Residue Glu164 is part of the active site. Position 167 (His167) interacts with Fe cation.

Belongs to the polypeptide deformylase family. Fe(2+) is required as a cofactor.

The catalysed reaction is N-terminal N-formyl-L-methionyl-[peptide] + H2O = N-terminal L-methionyl-[peptide] + formate. Its function is as follows. Removes the formyl group from the N-terminal Met of newly synthesized proteins. Requires at least a dipeptide for an efficient rate of reaction. N-terminal L-methionine is a prerequisite for activity but the enzyme has broad specificity at other positions. This Prochlorococcus marinus (strain AS9601) protein is Peptide deformylase.